Consider the following 201-residue polypeptide: Cell division protein SepF (201 aa).

Over residues 27–38 (VQERTSVQRDSR) the composition is skewed to basic and acidic residues. The segment at 27–99 (VQERTSVQRD…PRIQNKDSVR (73 aa)) is disordered. 2 stretches are compositionally biased toward polar residues: residues 43–54 (QEASQRSHMTNS) and 82–92 (DNSYQQATPRI).

The protein belongs to the SepF family. In terms of assembly, homodimer. Interacts with FtsZ.

The protein resides in the cytoplasm. In terms of biological role, cell division protein that is part of the divisome complex and is recruited early to the Z-ring. Probably stimulates Z-ring formation, perhaps through the cross-linking of FtsZ protofilaments. Its function overlaps with FtsA. In Streptococcus agalactiae serotype III (strain NEM316), this protein is Cell division protein SepF.